The chain runs to 384 residues: S-adenosylmethionine synthase (384 aa).

Histidine 15 contributes to the ATP binding site. Aspartate 17 provides a ligand contact to Mg(2+). Glutamate 43 serves as a coordination point for K(+). L-methionine-binding residues include glutamate 56 and glutamine 99. Residues 99–109 (QSPDINQGVDK) are flexible loop. Residues 164 to 166 (DAK), 230 to 231 (RF), aspartate 239, 245 to 246 (RK), alanine 262, and lysine 266 contribute to the ATP site. L-methionine is bound at residue aspartate 239. An L-methionine-binding site is contributed by lysine 270.

The protein belongs to the AdoMet synthase family. As to quaternary structure, homotetramer; dimer of dimers. It depends on Mg(2+) as a cofactor. The cofactor is K(+).

The protein localises to the cytoplasm. The catalysed reaction is L-methionine + ATP + H2O = S-adenosyl-L-methionine + phosphate + diphosphate. It functions in the pathway amino-acid biosynthesis; S-adenosyl-L-methionine biosynthesis; S-adenosyl-L-methionine from L-methionine: step 1/1. Catalyzes the formation of S-adenosylmethionine (AdoMet) from methionine and ATP. The overall synthetic reaction is composed of two sequential steps, AdoMet formation and the subsequent tripolyphosphate hydrolysis which occurs prior to release of AdoMet from the enzyme. This is S-adenosylmethionine synthase from Aliivibrio fischeri (strain ATCC 700601 / ES114) (Vibrio fischeri).